Reading from the N-terminus, the 3225-residue chain is Intermembrane lipid transfer protein VPS13 (3225 aa).

Residues 1-1390 are involved in phospholipid binding; it reads MLEGLVAGLL…VFAADVEQHT (1390 aa). The Chorein N-terminal domain occupies 2-115; that stretch reads LEGLVAGLLN…RHRLKMEKLD (114 aa). 2 disordered regions span residues 1568–1610 and 1768–1799; these read PEAP…QQLV and AGLKHRTASGKGTSTLATRTRHASQSAASHSG. Positions 1590-1610 are enriched in low complexity; sequence VRVGSSGRHSESSAGSGQQLV. A compositionally biased stretch (polar residues) spans 1777–1799; sequence GKGTSTLATRTRHASQSAASHSG. One can recognise an SHR-BD domain in the interval 2290–2570; sequence FKVTVYSPYV…PYAWDFPAAK (281 aa).

The protein belongs to the VPS13 family.

It localises to the membrane. In terms of biological role, mediates the transfer of lipids between membranes at organelle contact sites. Binds phospholipids, including phosphatidylcholine (PC), phosphatidylethanolamine (PE), phosphatidic acid (PA), and phosphatidylserine (PS). May play a role in mitochondrial lipid homeostasis, Golgi vesicle transport, reticulophagy, actin cytoskeleton organization and formation of the prospore membrane. In Chaetomium thermophilum (strain DSM 1495 / CBS 144.50 / IMI 039719) (Thermochaetoides thermophila), this protein is Intermembrane lipid transfer protein VPS13.